The following is a 507-amino-acid chain: uncharacterized protein (507 aa).

Residues 1–12 (MEKSISSISKAS) show a composition bias toward low complexity. A disordered region spans residues 1 to 20 (MEKSISSISKASMNSDEKLD). 12 consecutive transmembrane segments (helical) span residues 57–74 (FDFR…FNAL), 100–120 (IMIS…SYLY), 126–146 (ARIL…QAAV), 157–177 (WFLG…LTTF), 189–209 (IFYA…YGVF), 221–241 (YLFL…FLVL), 283–303 (VFKH…GVPL), 326–346 (LMTV…AFIS), 353–373 (GIVL…YGSI), 379–399 (IGVS…SSVL), 416–436 (VFTS…ANIF), and 445–465 (VPAL…VASI).

This sequence belongs to the major facilitator superfamily. Allantoate permease family.

It localises to the endoplasmic reticulum. It is found in the membrane. This is an uncharacterized protein from Schizosaccharomyces pombe (strain 972 / ATCC 24843) (Fission yeast).